Reading from the N-terminus, the 361-residue chain is Porphobilinogen deaminase (361 aa).

An N-acetylserine modification is found at Ser2. Ser69 bears the Phosphoserine mark. Lys74 bears the N6-acetyllysine mark. A Phosphoserine modification is found at Ser147. Cys261 is modified (S-(dipyrrolylmethanemethyl)cysteine).

It belongs to the HMBS family. As to quaternary structure, monomer. The cofactor is dipyrromethane.

It localises to the cytoplasm. Its subcellular location is the cytosol. The catalysed reaction is 4 porphobilinogen + H2O = hydroxymethylbilane + 4 NH4(+). Its pathway is porphyrin-containing compound metabolism; protoporphyrin-IX biosynthesis; coproporphyrinogen-III from 5-aminolevulinate: step 2/4. As part of the heme biosynthetic pathway, catalyzes the sequential polymerization of four molecules of porphobilinogen to form hydroxymethylbilane, also known as preuroporphyrinogen. Catalysis begins with the assembly of the dipyrromethane cofactor by the apoenzyme from two molecules of porphobilinogen or from preuroporphyrinogen. The covalently linked cofactor acts as a primer, around which the tetrapyrrole product is assembled. In the last step of catalysis, the product, preuroporphyrinogen, is released, leaving the cofactor bound to the holodeaminase intact. The polypeptide is Porphobilinogen deaminase (Hmbs) (Rattus norvegicus (Rat)).